A 265-amino-acid chain; its full sequence is tRNA (guanine-N(7)-)-methyltransferase (265 aa).

Residues Met1–Pro40 form a disordered region. Over residues Thr19–Ala32 the composition is skewed to low complexity. Positions 95, 120, 147, and 170 each coordinate S-adenosyl-L-methionine. The active site involves Asp170. Substrate is bound by residues Lys174, Asp206, and Thr241 to Glu244.

It belongs to the class I-like SAM-binding methyltransferase superfamily. TrmB family.

The enzyme catalyses guanosine(46) in tRNA + S-adenosyl-L-methionine = N(7)-methylguanosine(46) in tRNA + S-adenosyl-L-homocysteine. It participates in tRNA modification; N(7)-methylguanine-tRNA biosynthesis. Its function is as follows. Catalyzes the formation of N(7)-methylguanine at position 46 (m7G46) in tRNA. This chain is tRNA (guanine-N(7)-)-methyltransferase, found in Burkholderia pseudomallei (strain 1710b).